A 172-amino-acid polypeptide reads, in one-letter code: MTQAASGIDLFIPEVYDIVWSLIILVIVAVFFYKFFMPKFNAIFDERAAKIQGNIAKAEQARKDADEAKAKYEAQLSTARVDAAKIRDDARAEASHIIADARSRAESDAAQITASAQRSIESQHQQAIVSLKGEVGALATALAGKILGAKLEDNDVQSSMIDSMIDDLGAKK.

Residues 18–38 (IVWSLIILVIVAVFFYKFFMP) form a helical membrane-spanning segment.

The protein belongs to the ATPase B chain family. In terms of assembly, F-type ATPases have 2 components, F(1) - the catalytic core - and F(0) - the membrane proton channel. F(1) has five subunits: alpha(3), beta(3), gamma(1), delta(1), epsilon(1). F(0) has three main subunits: a(1), b(2) and c(10-14). The alpha and beta chains form an alternating ring which encloses part of the gamma chain. F(1) is attached to F(0) by a central stalk formed by the gamma and epsilon chains, while a peripheral stalk is formed by the delta and b chains.

Its subcellular location is the cell membrane. Functionally, f(1)F(0) ATP synthase produces ATP from ADP in the presence of a proton or sodium gradient. F-type ATPases consist of two structural domains, F(1) containing the extramembraneous catalytic core and F(0) containing the membrane proton channel, linked together by a central stalk and a peripheral stalk. During catalysis, ATP synthesis in the catalytic domain of F(1) is coupled via a rotary mechanism of the central stalk subunits to proton translocation. Its function is as follows. Component of the F(0) channel, it forms part of the peripheral stalk, linking F(1) to F(0). This chain is ATP synthase subunit b, found in Bifidobacterium longum (strain DJO10A).